Consider the following 654-residue polypeptide: Cytochrome B pre-mRNA-processing protein 1 (654 aa).

The protein resides in the mitochondrion. Responsible for conferring a stable 5'-end on cytochrome b mRNA. This chain is Cytochrome B pre-mRNA-processing protein 1 (CBP1), found in Saccharomyces cerevisiae (strain ATCC 204508 / S288c) (Baker's yeast).